We begin with the raw amino-acid sequence, 500 residues long: Intracellular exo-alpha-(1-&gt;5)-L-arabinofuranosidase 1 (500 aa).

Alpha-L-arabinofuranose-binding residues include glutamate 27, asparagine 72, and asparagine 172. Glutamate 173 functions as the Proton donor/acceptor in the catalytic mechanism. Residues tyrosine 244, glutamate 292, and glutamine 349 each contribute to the alpha-L-arabinofuranose site. Glutamate 292 (nucleophile) is an active-site residue.

The protein belongs to the glycosyl hydrolase 51 family. Homohexamer; trimer of dimers.

The protein resides in the cytoplasm. It catalyses the reaction Hydrolysis of terminal non-reducing alpha-L-arabinofuranoside residues in alpha-L-arabinosides.. It carries out the reaction (20S)-ginsenoside Rc + H2O = L-arabinofuranose + (20S)-ginsenoside Rd. It participates in glycan metabolism; L-arabinan degradation. With respect to regulation, at a concentration of 5 mM, K(+), Cu(2+) and Ni(2+) exhibit inhibitory effects on the activity. Additionally, the chemical reagent SDS also displays a certain degree of inhibition. Enzymatic activity is largely unaffected by product feedback inhibition. Functionally, involved in the degradation of arabinan and is a key enzyme in the complete degradation of the plant cell wall. Catalyzes the cleavage of terminal alpha-(1-&gt;5)-arabinofuranosyl bonds in different hemicellulosic homopolysaccharides (branched and debranched arabinans). It acts preferentially on arabinotriose, arabinobiose and linear alpha-(1-&gt;5)-L-arabinan, and is much less effective on branched sugar beet arabinan. When expressed in E.coli, the recombinant enyzme can hydrolyze, with relatively low catalytic efficiency, the terminal alpha-L-arabinofuranoside at the C20 position of ginsenoside Rc to produce ginsenoside Rd, a rare ginsenoside that exhibits diverse and powerful pharmacological activities. The chain is Intracellular exo-alpha-(1-&gt;5)-L-arabinofuranosidase 1 from Bacillus subtilis (strain 168).